The primary structure comprises 377 residues: Transcription initiation factor IIA subunit 1 (377 aa).

A2 is subject to N-acetylalanine. Composition is skewed to low complexity over residues 69–79 (QVQQQHQPQQQ), 89–105 (QAQP…TQQV), and 248–280 (QAQI…TGDT). 2 disordered regions span residues 69–107 (QVQQ…QVLI) and 248–330 (QAQI…QELF). 2 positions are modified to phosphoserine; by TAF1: S281 and S282. Acidic residues predominate over residues 281–330 (SSEEDEDEEEDYDDDEEEDKEKDGAEDGQVEEEPLNSEDDVSDEEGQELF). Residues S317 and S322 each carry the phosphoserine modification. Residues H344 and R345 each coordinate DNA.

It belongs to the TFIIA subunit 1 family. TFIIA is a heterodimer of the large unprocessed subunit 1 and a small subunit gamma. It was originally believed to be a heterotrimer of an alpha (p35), a beta (p19) and a gamma subunit (p12). TFIIA forms a complex with TBP. Part of TBP-based Pol II pre-initiation complex (PIC), in which Pol II core assembles with general transcription factors and other specific initiation factors including GTF2E1, GTF2E2, GTF2F1, GTF2F2, TCEA1, ERCC2, ERCC3, GTF2H2, GTF2H3, GTF2H4, GTF2H5, GTF2A1, GTF2A2, GTF2B and TBP; this large multi-subunit PIC complex mediates DNA unwinding and targets Pol II core to the transcription start site where the first phosphodiester bond forms. Post-translationally, the alpha and beta subunits are postranslationally produced from the precursor formby TASP1. The cleavage promotes proteasomal degradation.

The protein resides in the nucleus. Its function is as follows. TFIIA is a component of the transcription machinery of RNA polymerase II and plays an important role in transcriptional activation. TFIIA in a complex with TBP mediates transcriptional activity. The protein is Transcription initiation factor IIA subunit 1 (Gtf2a1) of Rattus norvegicus (Rat).